Reading from the N-terminus, the 515-residue chain is Maturase K (515 aa).

The protein belongs to the intron maturase 2 family. MatK subfamily.

The protein resides in the plastid. It localises to the chloroplast. In terms of biological role, usually encoded in the trnK tRNA gene intron. Probably assists in splicing its own and other chloroplast group II introns. This is Maturase K from Pinus armandii (Chinese white pine).